Consider the following 279-residue polypeptide: MLFIELLKAIFFGVIEGVTEWLPISSTGHLILVQEFIRLHQDKAFMEMFNIVIQLGAIIAVIVIYFERLNPFQPGKSPQQIRLTWQLWLKVAIACIPSIIIAVPLDDWFDVHFNHMLPIAIALIVYGIAFLWIEKRNQTLEPRVVKLSRMSYKTAFFIGCFQVLSIIPGTSRSGATILGAIILGASRTVAADFTFFLAIPTMFGYSGLKALKFFIDGNHLTLSQLLVLLVASLTAFAVSLYVIKLLTDYVKKHDFTVFGRYRIVLGSLLIVYSVFKSLF.

The next 8 membrane-spanning stretches (helical) occupy residues Leu2–Leu22, Ala44–Ile64, Trp85–Leu105, Phe113–Ile133, Val163–Leu183, Thr188–Leu208, Leu225–Leu245, and Phe255–Phe275.

It belongs to the UppP family.

The protein localises to the cell membrane. It carries out the reaction di-trans,octa-cis-undecaprenyl diphosphate + H2O = di-trans,octa-cis-undecaprenyl phosphate + phosphate + H(+). In terms of biological role, catalyzes the dephosphorylation of undecaprenyl diphosphate (UPP). Confers resistance to bacitracin. This is Undecaprenyl-diphosphatase from Streptococcus equi subsp. zooepidemicus (strain MGCS10565).